The sequence spans 343 residues: Putative kinase HI_0665 (343 aa).

The active-site Proton acceptor is the D209.

The protein belongs to the HipA Ser/Thr kinase family.

In Haemophilus influenzae (strain ATCC 51907 / DSM 11121 / KW20 / Rd), this protein is Putative kinase HI_0665.